A 104-amino-acid polypeptide reads, in one-letter code: Small ribosomal subunit protein uS10 (104 aa).

The protein belongs to the universal ribosomal protein uS10 family. As to quaternary structure, part of the 30S ribosomal subunit.

In terms of biological role, involved in the binding of tRNA to the ribosomes. This is Small ribosomal subunit protein uS10 from Albidiferax ferrireducens (strain ATCC BAA-621 / DSM 15236 / T118) (Rhodoferax ferrireducens).